The sequence spans 402 residues: Tryptophan synthase beta chain 2 (402 aa).

Lys97 is subject to N6-(pyridoxal phosphate)lysine.

Belongs to the TrpB family. As to quaternary structure, tetramer of two alpha and two beta chains. Pyridoxal 5'-phosphate serves as cofactor.

The catalysed reaction is (1S,2R)-1-C-(indol-3-yl)glycerol 3-phosphate + L-serine = D-glyceraldehyde 3-phosphate + L-tryptophan + H2O. It functions in the pathway amino-acid biosynthesis; L-tryptophan biosynthesis; L-tryptophan from chorismate: step 5/5. The beta subunit is responsible for the synthesis of L-tryptophan from indole and L-serine. This Wolinella succinogenes (strain ATCC 29543 / DSM 1740 / CCUG 13145 / JCM 31913 / LMG 7466 / NCTC 11488 / FDC 602W) (Vibrio succinogenes) protein is Tryptophan synthase beta chain 2 (trpB2).